We begin with the raw amino-acid sequence, 494 residues long: Anthranilate synthase component 1 (494 aa).

L-tryptophan-binding positions include Ser52 and 274–276 (PYM). 309 to 310 (GT) is a binding site for chorismate. Position 336 (Glu336) interacts with Mg(2+). Residues Tyr424, Arg444, 458-460 (GAG), and Gly460 each bind chorismate. Glu473 is a binding site for Mg(2+).

This sequence belongs to the anthranilate synthase component I family. In terms of assembly, heterotetramer consisting of two non-identical subunits: a beta subunit (TrpG) and a large alpha subunit (TrpE). Mg(2+) serves as cofactor.

It carries out the reaction chorismate + L-glutamine = anthranilate + pyruvate + L-glutamate + H(+). It functions in the pathway amino-acid biosynthesis; L-tryptophan biosynthesis; L-tryptophan from chorismate: step 1/5. Its activity is regulated as follows. Feedback inhibited by tryptophan. Functionally, part of a heterotetrameric complex that catalyzes the two-step biosynthesis of anthranilate, an intermediate in the biosynthesis of L-tryptophan. In the first step, the glutamine-binding beta subunit (TrpG) of anthranilate synthase (AS) provides the glutamine amidotransferase activity which generates ammonia as a substrate that, along with chorismate, is used in the second step, catalyzed by the large alpha subunit of AS (TrpE) to produce anthranilate. In the absence of TrpG, TrpE can synthesize anthranilate directly from chorismate and high concentrations of ammonia. This chain is Anthranilate synthase component 1 (trpE), found in Aquifex aeolicus (strain VF5).